Here is a 576-residue protein sequence, read N- to C-terminus: MRASKYHLNTLKEAPAEAEIASHQLMTRAGMIRKLAGGIYTYMPLGLKVIRKIEGIVREEMNAAGAIELLMPVVQPAELWMESGRWEQYGAELLRIKDRHQRDFVLQPTSEEVITDIARNEIQSYRQLPLNFYHIQTKFRDERRPRFGLMRGREFTMKDAYSFDRDEAGAQRSYDIMYAAYQRIFQRLGLEFRAVAADTGSIGGSRSHEFQVIADTGEDLIVYNPESDYAANIELAEAPALLATRAAPGQDLEAVPTPGAAKCEDVAKLLDLPLARTIKSIVLAVDQPEGPAQVWLLLLRGDHELNEIKAGKLPGLAGFRFATETEILDHFGCKPGYLGPIKTARPVHVVADRTVANMADFVCGANREDYHYQGANWGRDLPEPELVADLRNVVEGDPSPDGKGALSIQRGIEVGHVFFLGTKYSEALKATFLDDNGKPAVLQMGCYGIGVTRIVGAAIEQNHDARGIIWPRAIAPYEVVICPVGWGKSETVRDTALALYEALRARGVDVMLDDRDSRPGVMFAEWELIGVPLRVTVGERGLNEGVVELQARREAEAAKVPVDQALAQTLAKLDLL.

The protein belongs to the class-II aminoacyl-tRNA synthetase family. ProS type 1 subfamily. As to quaternary structure, homodimer.

The protein resides in the cytoplasm. It catalyses the reaction tRNA(Pro) + L-proline + ATP = L-prolyl-tRNA(Pro) + AMP + diphosphate. Catalyzes the attachment of proline to tRNA(Pro) in a two-step reaction: proline is first activated by ATP to form Pro-AMP and then transferred to the acceptor end of tRNA(Pro). As ProRS can inadvertently accommodate and process non-cognate amino acids such as alanine and cysteine, to avoid such errors it has two additional distinct editing activities against alanine. One activity is designated as 'pretransfer' editing and involves the tRNA(Pro)-independent hydrolysis of activated Ala-AMP. The other activity is designated 'posttransfer' editing and involves deacylation of mischarged Ala-tRNA(Pro). The misacylated Cys-tRNA(Pro) is not edited by ProRS. This is Proline--tRNA ligase from Bordetella pertussis (strain Tohama I / ATCC BAA-589 / NCTC 13251).